Reading from the N-terminus, the 695-residue chain is A-kinase anchor protein 17A (695 aa).

Positions 83–112 (VENKSLVKSFLACLDGKTIKLSGFSDILKV) are PKA-RI and PKA-RII subunit binding domain. Lys118 is covalently cross-linked (Glycyl lysine isopeptide (Lys-Gly) (interchain with G-Cter in SUMO1); alternate). Lys118 participates in a covalent cross-link: Glycyl lysine isopeptide (Lys-Gly) (interchain with G-Cter in SUMO2); alternate. Residues 147–256 (DTIHLEGLPC…KAVACNIKVS (110 aa)) enclose the RRM domain. Residues 279-337 (QELEQQREEQKRREKEAEERQRAEERKQKELEELERERKREEKLRKREQKQRDRELRRN) form a disordered region. The segment at 425 to 454 (LGLQRKERELRERLLSILLSKKPDDSHTHD) is PKA-RI-alpha subunit binding domain. A disordered region spans residues 482-695 (TTLHPLGGQP…PSRHRSTWNR (214 aa)). Ser537 carries the phosphoserine modification. Residues 567–585 (VSRKDTRSEQDKCNREPSK) show a composition bias toward basic and acidic residues. Basic residues-rich tracts occupy residues 598-609 (RHKRERSRARRA) and 618-628 (RKERRPHKKHA). A compositionally biased stretch (basic and acidic residues) spans 629-644 (YKDDSPRRRSTSPDHT). Position 633 is a phosphoserine (Ser633). Basic residues-rich tracts occupy residues 645–658 (RSRR…HRRE) and 666–695 (SASR…TWNR).

As to quaternary structure, monomer. Component of the spliceosome. Interacts with ZRANB2 and SFRS1/ASF through its Arg/Ser-rich domain. Interacts with RI and RII subunits of PKA. As to expression, widely expressed. Found in heart, brain, lung, liver, skeletal muscle, kidney and pancreas. Expressed in activated B-cells and placenta. Expressed in all cell lines tested including Jurkat-TAg, U-937 and HEK293 cells.

Its subcellular location is the nucleus speckle. Its function is as follows. Splice factor regulating alternative splice site selection for certain mRNA precursors. Mediates regulation of pre-mRNA splicing in a PKA-dependent manner. This is A-kinase anchor protein 17A (AKAP17A) from Homo sapiens (Human).